The primary structure comprises 902 residues: MPSNGGIIPGPANAASLPAPVLIEDNWVCCDMCHKWRLLPYGTNTSMLPKKWICSMLDWLPGMNKCDISEDETTNALNALYVTQIPAAGVSSGGPHTAHASVAASSTYNISGQLGQSRKRKNALKDENCYEHDQQAPAKMTLTSNQQAPAKNREVVDSEHYTNDRDPVSTHDLVPQSKSASERHKSKHKSRSSHSDGGDLTEKSKKHSKSKNRRGIDRDEHKTSKKTKKEDRHYFNKDWKNEYDLAGNKVRDETKALSAKAKMSKDSCEQDEFSLRKEKASRFDILEKTKRINDDDVAFHEKMKEHRAGIETLDLSGKKKTVKEWEDNRLSSMDHTSKGGDNENLNERLSKIKKSEARPEEVQDANALFSSAGRRQDNELVADNKFVTCKEGPSELWDNQPPRQVLNLAEPTRRDVACLQSSTVATSSSSKVSSSRRNKNSREAKGSPVESVSSSPLKNSNTDKISKARKTGKDGELNADSSILHTPMKYPTHEVGLLHTGQQAVGEAILRGSTNNSGMGRVDNQLYPGDKKILDMHGPTLQPDQQDCFNPRATADSTGHKSKNSAPSRQGRNGSSNLISEGNKQIEMSSRKEKLRPSIDNQDMQKSIGQDNHSHMKEGKSEVHTTRVKPGASKNHTQLRSNVENGDSASPIRRDGNMIAFALKEARDLKHKANHLKEKGLELESMGLYFEAALKFLHVASLWETPNLDNSRSGDVAQSMKMYSETAKLCSFCAHAYERCNKMASAALAYKCVEVAYLKAAYYKHPSASKDRQELQSVVQIAPGESPSSSASDIDNLNSHGLSKALSTKGGNSPQVAGNHLPLAVRNQAHLLRLLAYTNDVNCAFDATRKSQVAIASAASSQERGKTVDDGLASVRTVLDFNFNNVNELLRLVRLSMELINT.

The CW-type zinc finger occupies 21-74; it reads VLIEDNWVCCDMCHKWRLLPYGTNTSMLPKKWICSMLDWLPGMNKCDISEDETT. Zn(2+)-binding residues include Cys-30, Cys-33, Cys-54, and Cys-66. 4 disordered regions span residues 131–233, 326–345, 420–480, and 537–651; these read EHDQ…EDRH, EDNR…NENL, QSST…LNAD, and HGPT…SASP. Basic and acidic residues-rich tracts occupy residues 151 to 169 and 193 to 203; these read KNRE…DPVS and SHSDGGDLTEK. A compositionally biased stretch (basic residues) spans 204-213; it reads SKKHSKSKNR. Composition is skewed to basic and acidic residues over residues 214–233 and 335–345; these read RGID…EDRH and HTSKGGDNENL. Residues 421-433 are compositionally biased toward low complexity; sequence SSTVATSSSSKVS. Composition is skewed to polar residues over residues 450–463, 564–588, and 599–611; these read ESVS…SNTD, NSAP…QIEM, and IDNQ…IGQD. Basic and acidic residues predominate over residues 612–625; it reads NHSHMKEGKSEVHT. Residues 634 to 648 are compositionally biased toward polar residues; it reads KNHTQLRSNVENGDS.

Expressed in leaf sheaths, flag leaves, nodes, internodes and panicles.

The protein resides in the nucleus. Its function is as follows. Binds to histones H3K4me1, H3K4me2 and H3K4me3 in GST pull-down assay. May facilitate the recruitment of effectors to mediate gene expression. The chain is Cysteine-tryptophan domain-containing zinc finger protein 3 from Oryza sativa subsp. japonica (Rice).